Here is a 609-residue protein sequence, read N- to C-terminus: Glutamine--fructose-6-phosphate aminotransferase [isomerizing] (609 aa).

Residue Cys2 is the Nucleophile; for GATase activity of the active site. The 218-residue stretch at Cys2–Gly219 folds into the Glutamine amidotransferase type-2 domain. 2 consecutive SIS domains span residues Ile280–Thr426 and Trp458–Pro599. Lys604 serves as the catalytic For Fru-6P isomerization activity.

As to quaternary structure, homodimer.

Its subcellular location is the cytoplasm. It catalyses the reaction D-fructose 6-phosphate + L-glutamine = D-glucosamine 6-phosphate + L-glutamate. Catalyzes the first step in hexosamine metabolism, converting fructose-6P into glucosamine-6P using glutamine as a nitrogen source. This Chlamydia abortus (strain DSM 27085 / S26/3) (Chlamydophila abortus) protein is Glutamine--fructose-6-phosphate aminotransferase [isomerizing].